The chain runs to 266 residues: Type III pantothenate kinase (266 aa).

Aspartate 6–valine 13 contributes to the ATP binding site. A substrate-binding site is contributed by glycine 107–arginine 110. Residue aspartate 109 is the Proton acceptor of the active site. A K(+)-binding site is contributed by aspartate 129. ATP is bound at residue threonine 132. A substrate-binding site is contributed by threonine 184.

The protein belongs to the type III pantothenate kinase family. In terms of assembly, homodimer. Requires NH4(+) as cofactor. K(+) serves as cofactor.

The protein resides in the cytoplasm. The enzyme catalyses (R)-pantothenate + ATP = (R)-4'-phosphopantothenate + ADP + H(+). It participates in cofactor biosynthesis; coenzyme A biosynthesis; CoA from (R)-pantothenate: step 1/5. In terms of biological role, catalyzes the phosphorylation of pantothenate (Pan), the first step in CoA biosynthesis. This Acidiphilium cryptum (strain JF-5) protein is Type III pantothenate kinase.